A 546-amino-acid chain; its full sequence is Immunoglobulin heavy constant epsilon (546 aa).

The Extracellular portion of the chain corresponds to 1 to 499 (ASTQSPSVFP…EAPWTWTGLC (499 aa)). Ig-like domains follow at residues 6–103 (PSVF…KTFS), 112–210 (PTVK…KKCA), 214–318 (PRGV…TKTS), and 324–423 (PEVY…RAVS). Intrachain disulfides connect cysteine 15-cysteine 105, cysteine 29-cysteine 85, cysteine 135-cysteine 193, cysteine 239-cysteine 299, and cysteine 345-cysteine 405. 7 N-linked (GlcNAc...) asparagine glycosylation sites follow: asparagine 21, asparagine 49, asparagine 99, asparagine 146, asparagine 252, asparagine 264, and asparagine 275. A helical transmembrane segment spans residues 500–520 (IFAALFLLSVSYSAAITLLMV). Topologically, residues 521-546 (QRFLSATRQGRPQTSLDYTNVLQPHA) are cytoplasmic.

In terms of assembly, the basic structural unit of both sIgE and mIgE molecules consists of two identical heavy chains and two identical light chains; disulfide-linked. N-terminal variable regions of the heavy and light chains form the antigen binding sites, whereas the C-terminal constant regions of the heavy chains interact with immune receptors to mediate effector functions. As to quaternary structure, part of IgE antibody. Interacts (via CH3) with the alpha chain/FCE1RA of IgE Fc receptor complex. Interacts (via CH3 region) with FCER2 (via C-type lectin domain); this interaction regulates IgE homeostasis. Part of IgE B cell antigen receptor complex (BCR). The BCR complex consists of one mIgE molecule responsible for antigen binding, non-covalently associated with CD79A and CD79B signaling chains. Expressed in B lymphocytes stimulated with IL4 and CD40.

Its subcellular location is the secreted. It is found in the cell membrane. In terms of biological role, constant region of immunoglobulin heavy chains. Immunoglobulins, also known as antibodies, are membrane-bound or secreted glycoproteins produced by B lymphocytes. In the recognition phase of humoral immunity, the membrane-bound immunoglobulins serve as receptors which, upon binding of a specific antigen, trigger the clonal expansion and differentiation of B lymphocytes into immunoglobulins-secreting plasma cells. Secreted immunoglobulins mediate the effector phase of humoral immunity, which results in the elimination of bound antigens. The antigen binding site is formed by the variable domain of one heavy chain, together with that of its associated light chain. Thus, each immunoglobulin has two antigen binding sites with remarkable affinity for a particular antigen. The variable domains are assembled by a process called V-(D)-J rearrangement and can then be subjected to somatic hypermutations which, after exposure to antigen and selection, allow affinity maturation for a particular antigen. Functionally, constant region of secreted IgE, also known as the Fc region of IgE antibody. Mediates IgE effector functions on myeloid and lymphoid cells primarily via two Fc receptors, the high-affinity IgE Fc receptor complex/FCER1A:MS4A2:FCGR1A and the low-affinity FCER2 receptor, which upon antigen/allergen cross-linking initiate signaling pathways that lead to immune cell activation and differentiation. Triggers the immediate hypersensitivity response to allergens as a host defense mechanism against helminth parasites, pathogenic bacteria and venom toxicity. When dysregulated, it can elicit harmful life-threatening allergic and anaphylactic reactions. Stimulates the high-affinity IgE Fc receptor complex/FCER1A:MS4A2:FCGR1A on mast cells, basophils and eosinophils leading to secretion of vasoactive amines, lipid mediators and cytokines that contribute to inflammatory response, tissue remodeling and cytotoxicity against microbes. On macrophages, cross-linking of FCER2 by IgE immune complexes induces intracellular killing of parasites through activation of L-Arginine-nitric oxide pathway. Activates macrophages to kill tumor cells via antigen-specific antibody-dependent cytotoxicity (ADCC). Triggers differentiation of quiescent M0 macrophages toward M1 state and reprograms M2 macrophages toward a proinflammatory state with antitumor functions. Stimulates FCER2 on B cells and initiates IgE-dependent antigen uptake and presentation to T cells. Its function is as follows. Constant region of membrane-bound IgE (long mIgE), part of the B cell receptor complex (BCR). Upon antigen cross-linking triggers quick BCR signaling, ensuring survival of IgE-switched B cells and differentiation into plasma cells, thus regulating both primary and memory IgE responses. Constant region of membrane-bound IgE (short mIgE), part of the B cell receptor complex (BCR). Upon antigen cross-linking initiates slower but sustained BCR signaling that negatively regulates mature B cell proliferation. This chain is Immunoglobulin heavy constant epsilon, found in Homo sapiens (Human).